Consider the following 325-residue polypeptide: WUSCHEL-related homeobox 8 (325 aa).

The homeobox; WUS-type DNA-binding region spans 51 to 115 (DPKPRWNPKP…NRKSRAKHKL (65 aa)).

This sequence belongs to the WUS homeobox family. As to expression, expressed only in the egg cell. Not detected in the pollen tube. Expressed in the zygote, the basal cell, and later the suspensor. Expressed in all suspensor cells, except the hypophysis, and in the embryo surrounding region (ESR) endosperm cells. Strongly expressed in the suspensor cells, with a weak expression also detected throughout the developing embryo.

The protein resides in the nucleus. Functionally, probable transcription factor, which may be involved in embryonic patterning. May be required for basal embryo development after fertilization. Acts partially redundantly with STIP in promoting embryonic cell division and proliferation. Promotes cotyledon boundary formation by maintaining the symmetry in CUC genes expression domains. This Arabidopsis thaliana (Mouse-ear cress) protein is WUSCHEL-related homeobox 8.